The primary structure comprises 228 residues: PKHD-type hydroxylase Rmet_0838 (228 aa).

The Fe2OG dioxygenase domain maps to 78–179 (RVLPPMFNRY…RWASFFWAQS (102 aa)). 3 residues coordinate Fe cation: His96, Asp98, and His160. Arg170 provides a ligand contact to 2-oxoglutarate.

It depends on Fe(2+) as a cofactor. The cofactor is L-ascorbate.

This is PKHD-type hydroxylase Rmet_0838 from Cupriavidus metallidurans (strain ATCC 43123 / DSM 2839 / NBRC 102507 / CH34) (Ralstonia metallidurans).